Here is a 290-residue protein sequence, read N- to C-terminus: UPF0761 membrane protein YihY (290 aa).

The next 6 helical transmembrane spans lie at 44–64 (LLSL…FPMF), 104–124 (VGAC…DSAL), 140–160 (FAVY…SLAI), 183–203 (IFPL…VPTI), 210–230 (AIVG…GFAL), and 244–264 (VLAV…IVLL).

Belongs to the UPF0761 family.

The protein resides in the cell inner membrane. The protein is UPF0761 membrane protein YihY of Escherichia coli O139:H28 (strain E24377A / ETEC).